A 395-amino-acid polypeptide reads, in one-letter code: Calreticulin (395 aa).

The signal sequence occupies residues 1-15 (MKSLCLLAIVAVVSA). C101 and C133 are oxidised to a cystine. Positions 105, 107, 124, and 131 each coordinate an alpha-D-glucoside. 7 repeat units span residues 186-197 (AQTGSLEEDWDL), 205-216 (DPDAKKPEDWDE), 222-233 (DAEDAKPEDWEK), 239-250 (DPDAKKPEDWDD), 254-264 (GEWEPPMIDNP), 268-278 (GEWKPKQIKNP), and 282-292 (GKWIHPEIENP). Residues 186–250 (AQTGSLEEDW…DAKKPEDWDD (65 aa)) form a 4 X approximate repeats region. The segment at 193–301 (EDWDLLPAKK…PEYTPDDELY (109 aa)) is P-domain. The segment covering 202–212 (KIKDPDAKKPE) has biased composition (basic and acidic residues). Residues 202–255 (KIKDPDAKKPEDWDEREYIDDAEDAKPEDWEKPEHIPDPDAKKPEDWDDEMDGE) are disordered. Positions 213 to 224 (DWDEREYIDDAE) are enriched in acidic residues. Residues 225–246 (DAKPEDWEKPEHIPDPDAKKPE) are compositionally biased toward basic and acidic residues. The segment at 254–292 (GEWEPPMIDNPEYKGEWKPKQIKNPAYKGKWIHPEIENP) is 3 X approximate repeats. The tract at residues 302–395 (SYESWGAIGF…KEEEEGHDEL (94 aa)) is C-domain. An an alpha-D-glucoside-binding site is contributed by D312. The span at 340 to 380 (ETFDKLKTVEKEKKEKADEETRKAEEEARKKAEEEKEAKKD) shows a compositional bias: basic and acidic residues. Residues 340-395 (ETFDKLKTVEKEKKEKADEETRKAEEEARKKAEEEKEAKKDDDEEEKEEEEGHDEL) form a disordered region. Residues 381-395 (DDEEEKEEEEGHDEL) show a composition bias toward acidic residues. A Prevents secretion from ER motif is present at residues 392–395 (HDEL).

It belongs to the calreticulin family. In terms of processing, cleaved by caspase ced-3 in vitro.

Its subcellular location is the endoplasmic reticulum lumen. Its function is as follows. Molecular calcium-binding chaperone promoting folding, oligomeric assembly and quality control in the endoplasmic reticulum (ER) via the calreticulin/calnexin cycle. This lectin may interact transiently with almost all of the monoglucosylated glycoproteins that are synthesized in the ER. Probably by controlling the folding of extracellular matrix protein unc-52/Perlecan, may play a role in the formation of fibrous organelles, a hemidesmosome-like structure attaching muscles to the epidermis. Protects dopaminergic neurons against oxidative stress-induced neurodegeneration. May play a role in protection against ER stress. Plays a role in modulating lifespan, acting by influencing ER calcium homeostasis. The sequence is that of Calreticulin (crt-1) from Caenorhabditis elegans.